A 676-amino-acid chain; its full sequence is Rho guanine nucleotide exchange factor 37 (676 aa).

The disordered stretch occupies residues 1–26; the sequence is MADFETDEASSKSESPEQEGQGSEDK. Residues 30–213 form the DH domain; that stretch reads HQRLAIRELI…QDVNSNINEY (184 aa). The region spanning 254–455 is the BAR domain; the sequence is LKQEAGLVPR…LPHRHVSEPD (202 aa). SH3 domains follow at residues 506-569 and 603-666; these read GPGK…LYHP and PTMS…RTPS. Disordered stretches follow at residues 568–601 and 657–676; these read HPIN…SVPT and PSNF…NLPS.

Functionally, may act as a guanine nucleotide exchange factor (GEF). The protein is Rho guanine nucleotide exchange factor 37 (Arhgef37) of Rattus norvegicus (Rat).